A 258-amino-acid polypeptide reads, in one-letter code: Caffeoyl-CoA O-methyltransferase 1 (258 aa).

A compositionally biased stretch (low complexity) spans M1 to A16. The interval M1 to H31 is disordered. Residues Q22–H31 show a composition bias toward basic and acidic residues. Residue K32 coordinates substrate. S-adenosyl-L-methionine contacts are provided by residues T74, E96, G98–V99, S104, D122, and A151. Residue D174 participates in substrate binding. A divalent metal cation is bound at residue D174. An S-adenosyl-L-methionine-binding site is contributed by D176. A divalent metal cation contacts are provided by D200 and N201. Substrate is bound at residue N205.

The protein belongs to the class I-like SAM-binding methyltransferase superfamily. Cation-dependent O-methyltransferase family. CCoAMT subfamily. Requires a divalent metal cation as cofactor.

It carries out the reaction (E)-caffeoyl-CoA + S-adenosyl-L-methionine = (E)-feruloyl-CoA + S-adenosyl-L-homocysteine + H(+). The protein operates within aromatic compound metabolism; phenylpropanoid biosynthesis. Functionally, methylates caffeoyl-CoA to feruloyl-CoA and 5-hydroxyferuloyl-CoA to sinapoyl-CoA. Plays a role in the synthesis of feruloylated polysaccharides. Involved in the reinforcement of the plant cell wall. Also involved in the responding to wounding or pathogen challenge by the increased formation of cell wall-bound ferulic acid polymers. This is Caffeoyl-CoA O-methyltransferase 1 (CCOAOMT1) from Zea mays (Maize).